A 494-amino-acid polypeptide reads, in one-letter code: Solute carrier family 2, facilitated glucose transporter member 3 (494 aa).

Residues 1-10 lie on the Cytoplasmic side of the membrane; it reads MGTTKVTTPL. A helical transmembrane segment spans residues 11 to 32; that stretch reads IFAISIATIGSFQFGYNTGVIN. Topologically, residues 33 to 64 are extracellular; sequence APEAIIKDFLNYTLEERSETPPSSVLLTSLWS. Asparagine 43 is a glycosylation site (N-linked (GlcNAc...) asparagine). A helical membrane pass occupies residues 65–85; that stretch reads LSVAIFSVGGMIGSFSVGLFV. Topologically, residues 86–90 are cytoplasmic; that stretch reads NRFGR. The chain crosses the membrane as a helical span at residues 91–111; it reads RNSMLIVNLLAIAGGCLMGFC. The Extracellular segment spans residues 112 to 118; it reads KIAESVE. A helical membrane pass occupies residues 119-142; that stretch reads MLILGRLIIGLFCGLCTGFVPMYI. Over 143-153 the chain is Cytoplasmic; sequence GEISPTALRGA. Residues 154–174 traverse the membrane as a helical segment; sequence FGTLNQLGIVIGILVAQIFGL. Glutamine 159 lines the D-glucose pocket. Over 175–183 the chain is Extracellular; it reads KVILGTEDL. A helical transmembrane segment spans residues 184-204; that stretch reads WPLLLGFTILPAIIQCAALPF. At 205–269 the chain is on the cytoplasmic side; that stretch reads CPESPRFLLI…LFRAPNYRQP (65 aa). Position 232 is a phosphothreonine (threonine 232). The helical transmembrane segment at 270 to 290 threads the bilayer; it reads IIISIMLQLSQQLSGINAVFY. The segment at 277 to 279 is important for selectivity against fructose; sequence QLS. D-glucose-binding positions include 280–281 and asparagine 286; that span reads QQ. Residues 291 to 304 are Extracellular-facing; the sequence is YSTGIFKDAGVQEP. A helical transmembrane segment spans residues 305–325; it reads VYATIGAGVVNTIFTVVSVFL. Asparagine 315 is a D-glucose binding site. The Cytoplasmic portion of the chain corresponds to 326–331; the sequence is VERAGR. The helical transmembrane segment at 332–352 threads the bilayer; sequence RTLHLIGLGGMAFCSILMTIS. Residues 353–363 lie on the Extracellular side of the membrane; the sequence is LLLKDNYSWMS. The chain crosses the membrane as a helical span at residues 364 to 389; it reads FICIGAILVFVAFFEIGPGPIPWFIV. Residues glutamate 378 and tryptophan 386 each coordinate D-glucose. Residues 390-399 lie on the Cytoplasmic side of the membrane; the sequence is AELFGQGPRP. The chain crosses the membrane as a helical span at residues 400–420; sequence AAMAVAGCSNWTSNFLVGLLF. The Extracellular segment spans residues 421–429; the sequence is PSATFYLGA. A helical membrane pass occupies residues 430–450; the sequence is YVFIVFTVFLVIFWVFTFFKV. The Cytoplasmic segment spans residues 451-494; that stretch reads PETRGRTFEEITRAFEGQVQTGTRGEKGPIMEMNSIQPTKDTNA. The tract at residues 473 to 494 is disordered; it reads TRGEKGPIMEMNSIQPTKDTNA. Over residues 484 to 494 the composition is skewed to polar residues; the sequence is NSIQPTKDTNA. Position 485 is a phosphoserine (serine 485). At threonine 492 the chain carries Phosphothreonine.

Belongs to the major facilitator superfamily. Sugar transporter (TC 2.A.1.1) family. Glucose transporter subfamily. As to quaternary structure, interacts with SMIM43; the interaction may promote SLC2A3-mediated glucose transport to meet the energy needs of mesendoderm differentiation. In terms of tissue distribution, detected in placenta.

It localises to the cell membrane. The protein resides in the perikaryon. Its subcellular location is the cell projection. The catalysed reaction is D-glucose(out) = D-glucose(in). It catalyses the reaction D-galactose(in) = D-galactose(out). With respect to regulation, deoxyglucose transport is inhibited by D-glucose, D-galactose and maltose. Galactose transport is inhibited by D-glucose and maltose. Functionally, facilitative glucose transporter. Can also mediate the uptake of various other monosaccharides across the cell membrane. Mediates the uptake of glucose, 2-deoxyglucose, galactose, mannose, xylose and fucose, and probably also dehydroascorbate. Does not mediate fructose transport. Required for mesendoderm differentiation. The sequence is that of Solute carrier family 2, facilitated glucose transporter member 3 from Ovis aries (Sheep).